Here is a 242-residue protein sequence, read N- to C-terminus: Tryptophan synthase alpha chain (242 aa).

Active-site proton acceptor residues include E32 and D43.

This sequence belongs to the TrpA family. As to quaternary structure, tetramer of two alpha and two beta chains.

Its subcellular location is the plastid. It is found in the chloroplast. The catalysed reaction is (1S,2R)-1-C-(indol-3-yl)glycerol 3-phosphate + L-serine = D-glyceraldehyde 3-phosphate + L-tryptophan + H2O. The protein operates within amino-acid biosynthesis; L-tryptophan biosynthesis; L-tryptophan from chorismate: step 5/5. Its function is as follows. The alpha subunit is responsible for the aldol cleavage of indoleglycerol phosphate to indole and glyceraldehyde 3-phosphate. This Cyanidium caldarium (Red alga) protein is Tryptophan synthase alpha chain.